Reading from the N-terminus, the 372-residue chain is Alpha-1-antitrypsin homolog (372 aa).

The N-terminal stretch at 1–19 (MPATCLLHTMLTLPSPSTR) is a signal peptide. Asparagine 214 and asparagine 226 each carry an N-linked (GlcNAc...) asparagine glycan. Positions 328–347 (AATTIEIMPMSLPDTVILNR) are RCL.

The protein belongs to the serpin family.

It is found in the secreted. The protein is Alpha-1-antitrypsin homolog of Cyprinus carpio (Common carp).